Consider the following 166-residue polypeptide: MRVLILSADQFEDVELIYPYHRLKEEGHEVLVASFKRGVITGKHGYTVNVDLAFEEVNPDEFDALVLPGGRAPERVRLNEKAVEIAKKMFSEGKPVASICHGPQILISAGVLRGRRGTSYPGIKDDMINAGVDWVDAEVVVDGNWVSSRVPGDLYAWMREFVKLLK.

The PfpI endopeptidase domain maps to 1–166 (MRVLILSADQ…WMREFVKLLK (166 aa)). H101 is a catalytic residue.

It belongs to the peptidase C56 family. As to quaternary structure, homohexamer formed by a dimer of trimers that assemble into a hollow ring structure.

The protein localises to the cytoplasm. It carries out the reaction N(omega)-(1-hydroxy-2-oxopropyl)-L-arginyl-[protein] + H2O = lactate + L-arginyl-[protein] + H(+). The catalysed reaction is N(6)-(1-hydroxy-2-oxopropyl)-L-lysyl-[protein] + H2O = lactate + L-lysyl-[protein] + H(+). It catalyses the reaction S-(1-hydroxy-2-oxopropyl)-L-cysteinyl-[protein] + H2O = lactate + L-cysteinyl-[protein] + H(+). The enzyme catalyses N(omega)-(1-hydroxy-2-oxoethyl)-L-arginyl-[protein] + H2O = L-arginyl-[protein] + glycolate + H(+). It carries out the reaction N(6)-(1-hydroxy-2-oxoethyl)-L-lysyl-[protein] + H2O = glycolate + L-lysyl-[protein] + H(+). The catalysed reaction is S-(1-hydroxy-2-oxoethyl)-L-cysteinyl-[protein] + H2O = glycolate + L-cysteinyl-[protein] + H(+). In terms of biological role, deglycase that catalyzes the deglycation of the Maillard adducts formed between amino groups of proteins and reactive carbonyl groups of glyoxals. Thus, functions as a protein deglycase that repairs methylglyoxal- and glyoxal-glycated proteins, and releases repaired proteins and lactate or glycolate, respectively. Deglycates cysteine, arginine and lysine residues in proteins, and thus reactivates these proteins by reversing glycation by glyoxals. Acts on early glycation intermediates (hemithioacetals and aminocarbinols), preventing the formation of advanced glycation endproducts (AGE) that cause irreversible damage. Also displays proteolytic activity. In Pyrococcus abyssi (strain GE5 / Orsay), this protein is Deglycase PYRAB04690.